The chain runs to 360 residues: MLYWLAEYLQEYMRGFAVFQYLTVRAILSVLTALGISLLLGPWVIRRLTEMRIGQAVRSDGPQTHLSKSGTPTMGGALILSAMFISTLLWSDFGNRYVWVVLIVTAIFGAVGWVDDYRKVAKRDPKGLPARWKYFWQSIAGFGAAVFLFCTAQAPAETQLFIPFFKNVALNMGLFYIIFTYFVIVGTSNAVNLTDGLDGLAIMPSVMVAGALALIAYLAGHSQFAQYLHIAYIPGAGELAVFCCALVGAGLGFLWFNTYPAQVFMGDVGALALGAALGLVAVIVRHEFVLFIMGGIFVLETVSVILQVASFKLTGRRIFRMAPIHHHFELKGWPEPRVIVRFWIITLVLVLIGLATLKFR.

The next 10 membrane-spanning stretches (helical) occupy residues 25-45 (RAIL…PWVI), 74-94 (MGGA…SDFG), 97-117 (YVWV…VDDY), 134-154 (YFWQ…TAQA), 168-188 (VALN…VGTS), 199-219 (GLAI…AYLA), 236-256 (AGEL…FLWF), 263-283 (VFMG…VAVI), 288-308 (FVLF…ILQV), and 339-359 (IVRF…TLKF).

This sequence belongs to the glycosyltransferase 4 family. MraY subfamily. Mg(2+) is required as a cofactor.

The protein resides in the cell inner membrane. It carries out the reaction UDP-N-acetyl-alpha-D-muramoyl-L-alanyl-gamma-D-glutamyl-meso-2,6-diaminopimeloyl-D-alanyl-D-alanine + di-trans,octa-cis-undecaprenyl phosphate = di-trans,octa-cis-undecaprenyl diphospho-N-acetyl-alpha-D-muramoyl-L-alanyl-D-glutamyl-meso-2,6-diaminopimeloyl-D-alanyl-D-alanine + UMP. It participates in cell wall biogenesis; peptidoglycan biosynthesis. Catalyzes the initial step of the lipid cycle reactions in the biosynthesis of the cell wall peptidoglycan: transfers peptidoglycan precursor phospho-MurNAc-pentapeptide from UDP-MurNAc-pentapeptide onto the lipid carrier undecaprenyl phosphate, yielding undecaprenyl-pyrophosphoryl-MurNAc-pentapeptide, known as lipid I. The sequence is that of Phospho-N-acetylmuramoyl-pentapeptide-transferase from Cellvibrio japonicus (strain Ueda107) (Pseudomonas fluorescens subsp. cellulosa).